Consider the following 61-residue polypeptide: Small ribosomal subunit protein uS14 (61 aa).

Positions 24, 27, 40, and 43 each coordinate Zn(2+).

The protein belongs to the universal ribosomal protein uS14 family. Zinc-binding uS14 subfamily. Part of the 30S ribosomal subunit. Contacts proteins S3 and S10. Zn(2+) is required as a cofactor.

Its function is as follows. Binds 16S rRNA, required for the assembly of 30S particles and may also be responsible for determining the conformation of the 16S rRNA at the A site. The polypeptide is Small ribosomal subunit protein uS14 (Chloroflexus aurantiacus (strain ATCC 29364 / DSM 637 / Y-400-fl)).